A 376-amino-acid chain; its full sequence is N-acetyldiaminopimelate deacetylase (376 aa).

The active site involves Asp70. Glu129 functions as the Proton acceptor in the catalytic mechanism.

Belongs to the peptidase M20A family. N-acetyldiaminopimelate deacetylase subfamily.

It catalyses the reaction N-acetyl-(2S,6S)-2,6-diaminopimelate + H2O = (2S,6S)-2,6-diaminopimelate + acetate. It functions in the pathway amino-acid biosynthesis; L-lysine biosynthesis via DAP pathway; LL-2,6-diaminopimelate from (S)-tetrahydrodipicolinate (acetylase route): step 3/3. Catalyzes the conversion of N-acetyl-diaminopimelate to diaminopimelate and acetate. This chain is N-acetyldiaminopimelate deacetylase, found in Geobacillus sp. (strain WCH70).